Consider the following 137-residue polypeptide: Small ribosomal subunit protein uS12 (137 aa).

Positions 1-57 (MPTINQLVRKPRKSKVKKSKSPALNVGYNSRKKVQTNVSSPQKRGVATRVGTMTPKK) are disordered. Over residues 9–20 (RKPRKSKVKKSK) the composition is skewed to basic residues. A 3-methylthioaspartic acid modification is found at D102.

It belongs to the universal ribosomal protein uS12 family. Part of the 30S ribosomal subunit. Contacts proteins S8 and S17. May interact with IF1 in the 30S initiation complex.

With S4 and S5 plays an important role in translational accuracy. Functionally, interacts with and stabilizes bases of the 16S rRNA that are involved in tRNA selection in the A site and with the mRNA backbone. Located at the interface of the 30S and 50S subunits, it traverses the body of the 30S subunit contacting proteins on the other side and probably holding the rRNA structure together. The combined cluster of proteins S8, S12 and S17 appears to hold together the shoulder and platform of the 30S subunit. This Streptococcus suis (strain 05ZYH33) protein is Small ribosomal subunit protein uS12.